The chain runs to 401 residues: Tryptophan synthase beta chain (401 aa).

Residue K92 is modified to N6-(pyridoxal phosphate)lysine.

The protein belongs to the TrpB family. Tetramer of two alpha and two beta chains. Requires pyridoxal 5'-phosphate as cofactor.

The catalysed reaction is (1S,2R)-1-C-(indol-3-yl)glycerol 3-phosphate + L-serine = D-glyceraldehyde 3-phosphate + L-tryptophan + H2O. It participates in amino-acid biosynthesis; L-tryptophan biosynthesis; L-tryptophan from chorismate: step 5/5. In terms of biological role, the beta subunit is responsible for the synthesis of L-tryptophan from indole and L-serine. In Ruthia magnifica subsp. Calyptogena magnifica, this protein is Tryptophan synthase beta chain.